The following is a 93-amino-acid chain: Large ribosomal subunit protein uL23 (93 aa).

Belongs to the universal ribosomal protein uL23 family. As to quaternary structure, part of the 50S ribosomal subunit. Contacts protein L29, and trigger factor when it is bound to the ribosome.

Its function is as follows. One of the early assembly proteins it binds 23S rRNA. One of the proteins that surrounds the polypeptide exit tunnel on the outside of the ribosome. Forms the main docking site for trigger factor binding to the ribosome. This is Large ribosomal subunit protein uL23 from Nitratiruptor sp. (strain SB155-2).